The sequence spans 61 residues: Metallothionein-1 (61 aa).

The residue at position 1 (methionine 1) is an N-acetylmethionine. The tract at residues 1-29 is beta; that stretch reads MDPNCSCPTGGSCTCAGSCKCKACRCPSC. A divalent metal cation contacts are provided by cysteine 5, cysteine 7, cysteine 13, cysteine 15, cysteine 19, cysteine 21, cysteine 24, cysteine 26, cysteine 29, cysteine 33, cysteine 34, cysteine 36, cysteine 37, cysteine 41, cysteine 44, cysteine 48, cysteine 50, cysteine 57, cysteine 59, and cysteine 60. The segment at 30-61 is alpha; sequence KKSCCSCCPVGCAKCAQGCVCKGASDKCSCCA.

Belongs to the metallothionein superfamily. Type 1 family. As to quaternary structure, monomer.

Functionally, metallothioneins have a high content of cysteine residues that bind various heavy metals; these proteins are transcriptionally regulated by both heavy metals and glucocorticoids. This Bos taurus (Bovine) protein is Metallothionein-1 (MT1).